Consider the following 380-residue polypeptide: DNA primase small subunit PriS (380 aa).

Residues D103, D105, and D284 contribute to the active site.

This sequence belongs to the eukaryotic-type primase small subunit family. As to quaternary structure, heterodimer of a small subunit (PriS) and a large subunit (PriL). Mg(2+) is required as a cofactor. Requires Mn(2+) as cofactor.

Its function is as follows. Catalytic subunit of DNA primase, an RNA polymerase that catalyzes the synthesis of short RNA molecules used as primers for DNA polymerase during DNA replication. The small subunit contains the primase catalytic core and has DNA synthesis activity on its own. Binding to the large subunit stabilizes and modulates the activity, increasing the rate of DNA synthesis while decreasing the length of the DNA fragments, and conferring RNA synthesis capability. The DNA polymerase activity may enable DNA primase to also catalyze primer extension after primer synthesis. May also play a role in DNA repair. This is DNA primase small subunit PriS from Methanocorpusculum labreanum (strain ATCC 43576 / DSM 4855 / Z).